The primary structure comprises 288 residues: Acyl-CoA-binding domain-containing protein 6 homolog (288 aa).

Residues 6–94 (IENKFKLAVD…VNALSPGWDS (89 aa)) form the ACB domain. An acyl-CoA-binding positions include 36–40 (YCNYK), Lys62, and Tyr81. 2 ANK repeats span residues 200-229 (DGRT…NVNV) and 233-263 (EGMT…DKSI).

It localises to the cytoplasm. Binds long-chain acyl-coenzyme A molecules with a strong preference for unsaturated C18:1-CoA. Does not bind fatty acids. Plays a role in protein N-myristoylation. The polypeptide is Acyl-CoA-binding domain-containing protein 6 homolog (acbd6) (Dictyostelium discoideum (Social amoeba)).